A 633-amino-acid chain; its full sequence is Probable potassium transport system protein Kup (633 aa).

Transmembrane regions (helical) follow at residues 21–41 (MLVA…LYTL), 61–81 (ILSL…MMFV), 112–132 (LLVV…MITP), 149–169 (GIDH…FLIQ), 176–196 (IGIL…ALGV), 217–237 (FFMV…LALT), 258–278 (WFLL…ALLL), 290–310 (LLAP…ATVI), 348–368 (IYIG…VIGF), 377–397 (AYGV…SAVM), 398–418 (LLLW…FLLV), and 430–450 (IVQG…LMTT).

It belongs to the HAK/KUP transporter (TC 2.A.72) family.

The protein localises to the cell inner membrane. It carries out the reaction K(+)(in) + H(+)(in) = K(+)(out) + H(+)(out). In terms of biological role, transport of potassium into the cell. Likely operates as a K(+):H(+) symporter. The chain is Probable potassium transport system protein Kup from Pseudomonas fluorescens (strain Pf0-1).